Here is a 475-residue protein sequence, read N- to C-terminus: ADP-ribose glycohydrolase MACROD2 (475 aa).

The region spanning 59–240 is the Macro domain; sequence QEAPQMKKSL…IYKKKMNEFF (182 aa). Substrate contacts are provided by residues 77-79, 90-92, and 97-102; these read GDI, AAN, and GGGGVD. Lys-170 is covalently cross-linked (Glycyl lysine isopeptide (Lys-Gly) (interchain with G-Cter in ubiquitin)). Substrate is bound by residues 185–191 and Phe-224; that span reads ISTGIYG. 2 disordered regions span residues 241–306 and 324–475; these read PVDD…SQEA and GVNT…EDLQ. Composition is skewed to basic and acidic residues over residues 251-261 and 335-359; these read ADMKEDSEGPE and SEDK…DSDM. Residues 360–375 are compositionally biased toward polar residues; that stretch reads TNHSVCDQELPNGQEN. Basic and acidic residues predominate over residues 376–386; sequence DSAKSEGKTEA. 2 stretches are compositionally biased toward polar residues: residues 387–402 and 440–469; these read ESPS…SPNQ and SQGS…PTES.

This sequence belongs to the MacroD-type family. MacroD1/2-like subfamily. In terms of assembly, interacts with ADP-ribosylated PARP1. Expressed in the kidney.

The protein resides in the nucleus. The catalysed reaction is 2''-O-acetyl-ADP-D-ribose + H2O = ADP-D-ribose + acetate + H(+). It carries out the reaction 4-O-(ADP-D-ribosyl)-L-aspartyl-[protein] + H2O = L-aspartyl-[protein] + ADP-D-ribose + H(+). It catalyses the reaction 5-O-(ADP-D-ribosyl)-L-glutamyl-[protein] + H2O = L-glutamyl-[protein] + ADP-D-ribose + H(+). The enzyme catalyses alpha-NAD(+) + H2O = ADP-D-ribose + nicotinamide + H(+). With respect to regulation, subject to product inhibition by ADP-ribose. In terms of biological role, removes ADP-ribose from aspartate and glutamate residues in proteins bearing a single ADP-ribose moiety. Inactive towards proteins bearing poly-ADP-ribose. Deacetylates O-acetyl-ADP ribose, a signaling molecule generated by the deacetylation of acetylated lysine residues in histones and other proteins. In Mus musculus (Mouse), this protein is ADP-ribose glycohydrolase MACROD2.